A 671-amino-acid chain; its full sequence is Probable potassium transport system protein Kup 2 (671 aa).

Helical transmembrane passes span 18–38 (GFLI…LYAM), 60–80 (VSLV…LIAL), 103–123 (WLII…ALTP), 146–166 (AVMV…RFGA), 173–193 (FGPI…INSF), 218–238 (AGFF…ALYS), 252–272 (WPFV…WLLA), 292–312 (MVIY…QALI), 343–363 (LYIP…VLYF), 373–393 (YSLA…YFLI), 402–422 (IAII…ASLV), and 424–444 (FING…VMFI).

Belongs to the HAK/KUP transporter (TC 2.A.72) family.

The protein localises to the cell membrane. The enzyme catalyses K(+)(in) + H(+)(in) = K(+)(out) + H(+)(out). Functionally, transport of potassium into the cell. Likely operates as a K(+):H(+) symporter. This chain is Probable potassium transport system protein Kup 2, found in Lactococcus lactis subsp. lactis (strain IL1403) (Streptococcus lactis).